A 353-amino-acid chain; its full sequence is Protein RecA (353 aa).

An ATP-binding site is contributed by 75-82 (GPESSGKT).

It belongs to the RecA family.

It localises to the cytoplasm. In terms of biological role, can catalyze the hydrolysis of ATP in the presence of single-stranded DNA, the ATP-dependent uptake of single-stranded DNA by duplex DNA, and the ATP-dependent hybridization of homologous single-stranded DNAs. It interacts with LexA causing its activation and leading to its autocatalytic cleavage. This Cupriavidus necator (Alcaligenes eutrophus) protein is Protein RecA.